Here is a 92-residue protein sequence, read N- to C-terminus: Small ribosomal subunit protein uS19 (92 aa).

It belongs to the universal ribosomal protein uS19 family.

Functionally, protein S19 forms a complex with S13 that binds strongly to the 16S ribosomal RNA. The sequence is that of Small ribosomal subunit protein uS19 from Francisella tularensis subsp. tularensis (strain FSC 198).